A 477-amino-acid polypeptide reads, in one-letter code: Angiotensinogen (477 aa).

A signal peptide spans 1–24 (MTPTGAGLKATIFCILTWVSLTAG). Residues cysteine 42 and cysteine 161 are joined by a disulfide bond. 2 N-linked (GlcNAc...) asparagine glycosylation sites follow: asparagine 295 and asparagine 319.

The protein belongs to the serpin family. In terms of processing, in response to low blood pressure, the enzyme renin/REN cleaves angiotensinogen to produce angiotensin-1. Angiotensin-1 is a substrate of ACE (angiotensin converting enzyme) that removes a dipeptide to yield the physiologically active peptide angiotensin-2. Angiotensin-1 and angiotensin-2 can be further processed to generate angiotensin-3, angiotensin-4. Angiotensin 1-9 is cleaved from angiotensin-1 by ACE2 and can be further processed by ACE to produce angiotensin 1-7, angiotensin 1-5 and angiotensin 1-4. Angiotensin 1-7 has also been proposed to be cleaved from angiotensin-2 by ACE2 or from angiotensin-1 by MME (neprilysin). The disulfide bond is labile. Angiotensinogen is present in the circulation in a near 40:60 ratio with the oxidized disulfide-bonded form, which preferentially interacts with receptor-bound renin.

The protein resides in the secreted. Its function is as follows. Essential component of the renin-angiotensin system (RAS), a potent regulator of blood pressure, body fluid and electrolyte homeostasis. In terms of biological role, acts directly on vascular smooth muscle as a potent vasoconstrictor, affects cardiac contractility and heart rate through its action on the sympathetic nervous system, and alters renal sodium and water absorption through its ability to stimulate the zona glomerulosa cells of the adrenal cortex to synthesize and secrete aldosterone. Acts by binding to angiotensin receptors AGTR1 and AGTR2. Also binds the DEAR/FBXW7-AS1 receptor. Functionally, stimulates aldosterone release. Is a ligand for the G-protein coupled receptor MAS1. Has vasodilator and antidiuretic effects. Has an antithrombotic effect that involves MAS1-mediated release of nitric oxide from platelets. The protein is Angiotensinogen (Agt) of Rattus norvegicus (Rat).